Consider the following 170-residue polypeptide: MAQIRIHEVNTRIENEVEVSKFLQEEGVLYEKWNISKLPPHLNENYSLTDENKAEILAVFSKEIADVSARRGYKAHDVISLSNSTPNLDELLINFQKEHHHTDDEVRFIVSGHGIFAIEGKDGTFFDVELEPGDLISVPENARHYFTLQDDRQVVAIRIFVTTEGWVPIY.

Residues H99, H101, E105, and H144 each coordinate Fe(2+). Residues H99, H101, E105, and H144 each contribute to the Ni(2+) site.

This sequence belongs to the acireductone dioxygenase (ARD) family. Monomer. Fe(2+) is required as a cofactor. Ni(2+) serves as cofactor.

It carries out the reaction 1,2-dihydroxy-5-(methylsulfanyl)pent-1-en-3-one + O2 = 3-(methylsulfanyl)propanoate + CO + formate + 2 H(+). The enzyme catalyses 1,2-dihydroxy-5-(methylsulfanyl)pent-1-en-3-one + O2 = 4-methylsulfanyl-2-oxobutanoate + formate + 2 H(+). The protein operates within amino-acid biosynthesis; L-methionine biosynthesis via salvage pathway; L-methionine from S-methyl-5-thio-alpha-D-ribose 1-phosphate: step 5/6. Its function is as follows. Catalyzes 2 different reactions between oxygen and the acireductone 1,2-dihydroxy-3-keto-5-methylthiopentene (DHK-MTPene) depending upon the metal bound in the active site. Fe-containing acireductone dioxygenase (Fe-ARD) produces formate and 2-keto-4-methylthiobutyrate (KMTB), the alpha-ketoacid precursor of methionine in the methionine recycle pathway. Ni-containing acireductone dioxygenase (Ni-ARD) produces methylthiopropionate, carbon monoxide and formate, and does not lie on the methionine recycle pathway. This is Acireductone dioxygenase from Bacillus cereus (strain ZK / E33L).